We begin with the raw amino-acid sequence, 342 residues long: tRNA N6-adenosine threonylcarbamoyltransferase (342 aa).

Fe cation-binding residues include histidine 112 and histidine 116. Substrate is bound by residues leucine 134–glycine 138, aspartate 167, glycine 180, and asparagine 280. Fe cation is bound at residue aspartate 308.

This sequence belongs to the KAE1 / TsaD family. Fe(2+) is required as a cofactor.

It is found in the cytoplasm. The catalysed reaction is L-threonylcarbamoyladenylate + adenosine(37) in tRNA = N(6)-L-threonylcarbamoyladenosine(37) in tRNA + AMP + H(+). Required for the formation of a threonylcarbamoyl group on adenosine at position 37 (t(6)A37) in tRNAs that read codons beginning with adenine. Is involved in the transfer of the threonylcarbamoyl moiety of threonylcarbamoyl-AMP (TC-AMP) to the N6 group of A37, together with TsaE and TsaB. TsaD likely plays a direct catalytic role in this reaction. This is tRNA N6-adenosine threonylcarbamoyltransferase from Rickettsia canadensis (strain McKiel).